We begin with the raw amino-acid sequence, 692 residues long: TBC1 domain family member 14 (692 aa).

Ser91 carries the phosphoserine modification. Disordered stretches follow at residues 270–303 and 315–335; these read NAQK…RKNL and LEDR…KHRQ. The span at 271-287 shows a compositional bias: basic and acidic residues; that stretch reads AQKDAKKLQKEYEDKAG. Position 294 is a phosphoserine (Ser294). Positions 326–335 are enriched in basic and acidic residues; it reads PAEEAQKHRQ. The Rab-GAP TBC domain occupies 400–610; that stretch reads GIPPSVRGKV…RVWDVFCRDG (211 aa).

As to quaternary structure, interacts with ULK1. May interact with RAB11A and RAB11B, but does not exhibit any GTPase-activating activity toward these proteins. Interacts with TRAPPC8.

The protein resides in the golgi apparatus. It is found in the cis-Golgi network. The protein localises to the trans-Golgi network. Functionally, plays a role in the regulation of starvation-induced autophagosome formation. Together with the TRAPPIII complex, regulates a constitutive trafficking step from peripheral recycling endosomes to the early Golgi, maintaining the cycling pool of ATG9 required for initiation of autophagy. This chain is TBC1 domain family member 14 (TBC1D14), found in Bos taurus (Bovine).